The chain runs to 323 residues: Flavone synthase cfoJ (323 aa).

Requires FMN as cofactor.

It participates in secondary metabolite biosynthesis; flavonoid biosynthesis. FMN-dependent oxidoreductase; part of the gene cluster that mediates the biosynthesis of chlorflavonin, a fungal flavonoid with acetolactate synthase inhibitory activity. Within the pathway, cfoJ acts as a flavone synthase (FNS) and catalyzes the formation of a double bond between C2 and C3, converting the flavanone into a flavone. The pathway begins with the PKS-NRPS hybrid synthetase cfoA that uses benzoic acid or p-hydroxybenzoic acid as a starter unit with four rounds of chain elongation using malonyl-CoA to form the chalcone skeleton. Then, a new type of chalcone isomerase, cfoK, catalyzes the conversion of the chalcone into a flavanone by a histidine-mediated oxa-Michael addition mechanism. The desaturation of flavanone to flavone is catalyzed by a new type of flavone synthase, the flavin mononucleotide (FMN)-dependent oxidoreductase cfoJ. Monooxygenases cfoF, cfoG, and P450 cfoH are responsible for the hydroxylation of the flavonoid skeleton at sites C3, C8, and C2', respectively. Like cfoF, the dehydratase cfoI plays also a role in the hydroxylation of position C3. Methyltransferases cfoB, cfoC, and cfoD then catalyze the methylation of C7-OH, C8-OH, and C3-OH, respectively. Finally, the monooxygenase cfoE is responsible for the chlorination of flavonoid at position C3'. The chain is Flavone synthase cfoJ from Aspergillus candidus.